We begin with the raw amino-acid sequence, 81 residues long: Exodeoxyribonuclease 7 small subunit (81 aa).

Residues 59–81 form a disordered region; the sequence is KLVDKDGNEKTLDPQNASAPEEE. The segment covering 60–70 has biased composition (basic and acidic residues); the sequence is LVDKDGNEKTL. Positions 71–81 are enriched in polar residues; that stretch reads DPQNASAPEEE.

It belongs to the XseB family. Heterooligomer composed of large and small subunits.

It is found in the cytoplasm. It carries out the reaction Exonucleolytic cleavage in either 5'- to 3'- or 3'- to 5'-direction to yield nucleoside 5'-phosphates.. Its function is as follows. Bidirectionally degrades single-stranded DNA into large acid-insoluble oligonucleotides, which are then degraded further into small acid-soluble oligonucleotides. The chain is Exodeoxyribonuclease 7 small subunit from Lactobacillus gasseri (strain ATCC 33323 / DSM 20243 / BCRC 14619 / CIP 102991 / JCM 1131 / KCTC 3163 / NCIMB 11718 / NCTC 13722 / AM63).